The chain runs to 91 residues: Small ribosomal subunit protein bS18 (91 aa).

Residues 1-14 (MTNQNQSQTQTTQT) are compositionally biased toward low complexity. The tract at residues 1–24 (MTNQNQSQTQTTQTVEKVSSRQKK) is disordered.

It belongs to the bacterial ribosomal protein bS18 family. Part of the 30S ribosomal subunit. Forms a tight heterodimer with protein bS6.

Its function is as follows. Binds as a heterodimer with protein bS6 to the central domain of the 16S rRNA, where it helps stabilize the platform of the 30S subunit. The sequence is that of Small ribosomal subunit protein bS18 from Caldicellulosiruptor saccharolyticus (strain ATCC 43494 / DSM 8903 / Tp8T 6331).